Reading from the N-terminus, the 429-residue chain is Glucose-6-phosphate isomerase (429 aa).

E282 serves as the catalytic Proton donor. Catalysis depends on residues H303 and K418.

The protein belongs to the GPI family.

The protein resides in the cytoplasm. It carries out the reaction alpha-D-glucose 6-phosphate = beta-D-fructose 6-phosphate. The protein operates within carbohydrate biosynthesis; gluconeogenesis. Its pathway is carbohydrate degradation; glycolysis; D-glyceraldehyde 3-phosphate and glycerone phosphate from D-glucose: step 2/4. Catalyzes the reversible isomerization of glucose-6-phosphate to fructose-6-phosphate. This Mesomycoplasma hyopneumoniae (strain 232) (Mycoplasma hyopneumoniae) protein is Glucose-6-phosphate isomerase.